The chain runs to 347 residues: Aurora kinase A- and ninein-interacting protein (347 aa).

The interval 182–347 is interaction with AURKA; it reads QREAKRKREG…DSEGNRVIRH (166 aa). Residues 273–347 form an interaction with RBBP8/CtIP region; that stretch reads RDSWSQLFTE…DSEGNRVIRH (75 aa). Phosphoserine is present on serine 284. Over residues 301–322 the composition is skewed to polar residues; the sequence is VTNARNQGSGQFPDSPQAQGQD. The interval 301–325 is disordered; sequence VTNARNQGSGQFPDSPQAQGQDGPT.

This sequence belongs to the AUNIP family. In terms of assembly, interacts (via C-terminus) with AURKA (via C-terminus). Interacts (via N-terminus) with NIN; this interaction blocks NIN phosphorylation by both AURKA and GSK3B. Identified in a complex with NIN and AURKA. Interacts with RBBP8/CtIP.

It is found in the nucleus. It localises to the chromosome. The protein localises to the cytoplasm. The protein resides in the cytoskeleton. Its subcellular location is the microtubule organizing center. It is found in the centrosome. It localises to the spindle pole. Its function is as follows. DNA-binding protein that accumulates at DNA double-strand breaks (DSBs) following DNA damage and promotes DNA resection and homologous recombination. Serves as a sensor of DNA damage: binds DNA with a strong preference for DNA substrates that mimic structures generated at stalled replication forks, and anchors RBBP8/CtIP to DSB sites to promote DNA end resection and ensuing homologous recombination repair. Inhibits non-homologous end joining (NHEJ). Required for the dynamic movement of AURKA at the centrosomes and spindle apparatus during the cell cycle. The chain is Aurora kinase A- and ninein-interacting protein from Rattus norvegicus (Rat).